The primary structure comprises 89 residues: Cell division topological specificity factor (89 aa).

This sequence belongs to the MinE family.

In terms of biological role, prevents the cell division inhibition by proteins MinC and MinD at internal division sites while permitting inhibition at polar sites. This ensures cell division at the proper site by restricting the formation of a division septum at the midpoint of the long axis of the cell. The sequence is that of Cell division topological specificity factor from Janthinobacterium sp. (strain Marseille) (Minibacterium massiliensis).